Here is a 160-residue protein sequence, read N- to C-terminus: Nucleotide-binding protein MADE_1020535 (160 aa).

Belongs to the YajQ family.

Functionally, nucleotide-binding protein. This Alteromonas mediterranea (strain DSM 17117 / CIP 110805 / LMG 28347 / Deep ecotype) protein is Nucleotide-binding protein MADE_1020535.